Here is a 196-residue protein sequence, read N- to C-terminus: Imidazoleglycerol-phosphate dehydratase (196 aa).

This sequence belongs to the imidazoleglycerol-phosphate dehydratase family.

It is found in the cytoplasm. It catalyses the reaction D-erythro-1-(imidazol-4-yl)glycerol 3-phosphate = 3-(imidazol-4-yl)-2-oxopropyl phosphate + H2O. It functions in the pathway amino-acid biosynthesis; L-histidine biosynthesis; L-histidine from 5-phospho-alpha-D-ribose 1-diphosphate: step 6/9. In Halobacterium salinarum (strain ATCC 700922 / JCM 11081 / NRC-1) (Halobacterium halobium), this protein is Imidazoleglycerol-phosphate dehydratase.